Here is a 249-residue protein sequence, read N- to C-terminus: Eukaryotic translation initiation factor 3 subunit K (249 aa).

In terms of domain architecture, PCI spans 46–222 (FDCYANLALL…VKVPTNKENE (177 aa)).

Belongs to the eIF-3 subunit K family. In terms of assembly, component of the eukaryotic translation initiation factor 3 (eIF-3) complex.

It is found in the cytoplasm. Component of the eukaryotic translation initiation factor 3 (eIF-3) complex, which is involved in protein synthesis of a specialized repertoire of mRNAs and, together with other initiation factors, stimulates binding of mRNA and methionyl-tRNAi to the 40S ribosome. The eIF-3 complex specifically targets and initiates translation of a subset of mRNAs involved in cell proliferation. The chain is Eukaryotic translation initiation factor 3 subunit K from Aspergillus fumigatus (strain CBS 144.89 / FGSC A1163 / CEA10) (Neosartorya fumigata).